The chain runs to 219 residues: MTQRGRAAKPTGPTGRPRRTGGQRGTDRVGRGGDLATRRARLHQVVEPVVQGAGYDLEDLSVSRAGRRHVVQVIVDADGGVDLDAVADVSRAVSAALDAAEEVGGDIVAGEYQLEVSSPGVARPLTLPRHWRRNTGRLVRFTVRGGPEAVDRQVTGRVVEADDERVVVETDAGRTEWRHAELGPGRVQVEFTRPGEPDAFDGTDEAGDFDDDDVEDEER.

Disordered stretches follow at residues 1–38 and 189–219; these read MTQR…LATR and VEFT…DEER. Acidic residues predominate over residues 198 to 219; the sequence is DAFDGTDEAGDFDDDDVEDEER.

It belongs to the RimP family.

The protein localises to the cytoplasm. Its function is as follows. Required for maturation of 30S ribosomal subunits. The polypeptide is Ribosome maturation factor RimP (Salinispora arenicola (strain CNS-205)).